Here is a 294-residue protein sequence, read N- to C-terminus: Shikimate dehydrogenase (NADP(+)) (294 aa).

Shikimate is bound by residues Ser-23–Ser-25 and Thr-70. Catalysis depends on Lys-74, which acts as the Proton acceptor. Shikimate is bound by residues Asn-95 and Asp-110. Residues Gly-135–Ala-139, Asn-159–Arg-164, and Met-232 contribute to the NADP(+) site. Tyr-234 contributes to the shikimate binding site. Gly-255 contributes to the NADP(+) binding site.

This sequence belongs to the shikimate dehydrogenase family. In terms of assembly, homodimer.

It catalyses the reaction shikimate + NADP(+) = 3-dehydroshikimate + NADPH + H(+). The protein operates within metabolic intermediate biosynthesis; chorismate biosynthesis; chorismate from D-erythrose 4-phosphate and phosphoenolpyruvate: step 4/7. Involved in the biosynthesis of the chorismate, which leads to the biosynthesis of aromatic amino acids. Catalyzes the reversible NADPH linked reduction of 3-dehydroshikimate (DHSA) to yield shikimate (SA). This Cupriavidus pinatubonensis (strain JMP 134 / LMG 1197) (Cupriavidus necator (strain JMP 134)) protein is Shikimate dehydrogenase (NADP(+)).